The sequence spans 475 residues: 3-hydroxyacyl-CoA dehydrogenase-like protein LAM1 (475 aa).

Position 99–104 (99–104 (GTRPFA)) interacts with NAD(+). K149 is a binding site for CoA. Position 245 (N245) interacts with NAD(+).

The protein belongs to the 3-hydroxyacyl-CoA dehydrogenase family.

It participates in mycotoxin biosynthesis. 3-hydroxyacyl-CoA dehydrogenase-like protein; part of the Tox1A locus, one of the 2 loci that mediate the biosynthesis of T-toxin, a family of linear polyketides 37 to 45 carbons in length, of which the major component is 41 carbons, and which leads to high virulence to maize. One of the PKSs (PKS1 or PKS2) could synthesize a precursor, used subsequently by the other PKS as starter unit, to add additional carbons. Variability in the length of the final carbon backbone C35-47 could be achieved by varying the number of condensation cycles, or use of different starter or extender units or might be due to decarboxylation of the penultimate product, catalyzed by DEC1. Additional proteins are required for the biosynthesis of T-toxin, including oxidoreductases RED1, RED2, RED3, LAM1 and OXI1, as well as esterase TOX9. This is 3-hydroxyacyl-CoA dehydrogenase-like protein LAM1 from Cochliobolus heterostrophus (strain C4 / ATCC 48331 / race T) (Southern corn leaf blight fungus).